We begin with the raw amino-acid sequence, 487 residues long: Calcium-dependent mitochondrial ATP-magnesium/phosphate carrier protein 2 (487 aa).

Residues 1–211 lie on the Mitochondrial intermembrane side of the membrane; sequence MEATKSSKQN…ISKHIKRSNY (211 aa). 4 EF-hand domains span residues 36–71, 72–107, 108–138, and 139–174; these read ERDLRIRSLFSFFDSENVGYLDCAQIEKGLCALQIP, SGYKYAKELFRVCDANRDGRVDYHEFRRYMDDKELE, LYRIFQAIDVEHNGCISPEGLWDSLVKAGIE, and IKDEELARFVEHVDKDNDGIIMFEEWRDFLLLYPHE. Ca(2+) contacts are provided by Asp85, Asn87, Asp89, Arg91, and Glu96. Ca(2+)-binding residues include Asp152, Asp154, Asp156, and Glu163. Solcar repeat units follow at residues 206-289, 301-389, and 400-483; these read IKRS…FKNA, IGTT…LKDL, and PGPL…MKKS. The helical transmembrane segment at 212–229 threads the bilayer; sequence FIAGGIAGAASRTATAPL. Topologically, residues 230 to 263 are mitochondrial matrix; it reads DRLKVLLQIQKTDARIREAIKLIWKQGGVRGFFR. The helical transmembrane segment at 264–283 threads the bilayer; the sequence is GNGLNIVKVAPESAIKFYAY. The Mitochondrial intermembrane portion of the chain corresponds to 284-310; it reads ELFKNAIGENMGEDKADIGTTVRLFAG. Residues 311-324 traverse the membrane as a helical segment; sequence GMAGAVAQASIYPL. Topologically, residues 325-363 are mitochondrial matrix; that stretch reads DLVKTRLQTYTSQAGVAVPRLGTLTKDILVHEGPRAFYK. A helical transmembrane segment spans residues 364–383; sequence GLFPSLLGIIPYAGIDLAAY. The Mitochondrial intermembrane segment spans residues 384–405; sequence ETLKDLSRTYILQDAEPGPLVQ. The chain crosses the membrane as a helical span at residues 406-423; it reads LGCGTISGALGATCVYPL. Residues 424–457 lie on the Mitochondrial matrix side of the membrane; sequence QVVRTRMQAERARTSMSGVFRRTISEEGYRALYK. Residues 458 to 477 form a helical membrane-spanning segment; it reads GLLPNLLKVVPAASITYMVY. Residues 478–487 lie on the Mitochondrial intermembrane side of the membrane; that stretch reads EAMKKSLELD.

Belongs to the mitochondrial carrier (TC 2.A.29) family. In terms of tissue distribution, expressed in flowers, leaves, stems, roots and seedlings, mostly in aerial parts.

The protein resides in the mitochondrion inner membrane. Its activity is regulated as follows. Counter-exchange transport activity is saturable and inhibited by pyridoxal-5'-phosphate, EDTA and EGTA. Activated by calcium Ca(2+) and manganese Mn(2+) ions, and slightly by iron Fe(2+) and zinc Zn(2+) ions. Repressed by copper ions Cu(2+) and slightly by magnesium Mg(2+) ions. Magnesium Mg(2+) ions promotes slightly ATP uptake, ATP-Mg(2+) being exchanged with ATP(4-). Functionally, calcium-dependent mitochondrial carrier protein that catalyzes the import of ATP co-transported with metal divalent cations across the mitochondrial inner membrane in exchange for phosphate (Pi). Can transport phosphate, AMP, ADP, ATP, adenosine 5'-phosphosulfate, sulfate and thiosulfate, and, to a lesser extent, other nucleotides. Binds calcium ions Ca(2+). Also mediates calcium uptake. In Arabidopsis thaliana (Mouse-ear cress), this protein is Calcium-dependent mitochondrial ATP-magnesium/phosphate carrier protein 2.